The sequence spans 436 residues: Trigger factor (436 aa).

The 86-residue stretch at 163 to 248 (GDTVVIDFDG…IHEVKEKQLP (86 aa)) folds into the PPIase FKBP-type domain.

Belongs to the FKBP-type PPIase family. Tig subfamily.

It localises to the cytoplasm. It carries out the reaction [protein]-peptidylproline (omega=180) = [protein]-peptidylproline (omega=0). Functionally, involved in protein export. Acts as a chaperone by maintaining the newly synthesized protein in an open conformation. Functions as a peptidyl-prolyl cis-trans isomerase. This chain is Trigger factor, found in Levilactobacillus brevis (strain ATCC 367 / BCRC 12310 / CIP 105137 / JCM 1170 / LMG 11437 / NCIMB 947 / NCTC 947) (Lactobacillus brevis).